The following is a 1011-amino-acid chain: Antigenic heat-stable 120 kDa protein (1011 aa).

3 disordered regions span residues 1–37 (DTSE…TPAL), 54–73 (TPSM…TSDP), and 348–396 (GQSK…PQSQ). The segment covering 12–27 (EYTEEQKQTEEQEQKE) has biased composition (basic and acidic residues). Composition is skewed to polar residues over residues 348–373 (GQSK…QYKQ) and 380–396 (PTNQ…PQSQ).

The protein localises to the cytoplasm. The polypeptide is Antigenic heat-stable 120 kDa protein (sca4) (Rickettsia sibirica subsp. mongolitimonae (Rickettsia mongolotimonae)).